Reading from the N-terminus, the 186-residue chain is Lactoylglutathione lyase (186 aa).

The VOC domain maps to 28 to 175; that stretch reads FMQQTMFRIK…DGYWIELFDR (148 aa). Q31 and R35 together coordinate substrate. Q31 contacts Zn(2+). A Zn(2+)-binding site is contributed by E97. Residues N101, R121, H125, and 155-156 contribute to the substrate site; that span reads KM. Residue H125 coordinates Zn(2+). Zn(2+) is bound at residue E171. E171 acts as the Proton donor/acceptor in catalysis.

This sequence belongs to the glyoxalase I family. The cofactor is Zn(2+).

It carries out the reaction (R)-S-lactoylglutathione = methylglyoxal + glutathione. It participates in secondary metabolite metabolism; methylglyoxal degradation; (R)-lactate from methylglyoxal: step 1/2. In terms of biological role, catalyzes the conversion of hemimercaptal, formed from methylglyoxal and glutathione, to S-lactoylglutathione. This is Lactoylglutathione lyase from Cicer arietinum (Chickpea).